A 131-amino-acid polypeptide reads, in one-letter code: Large-conductance mechanosensitive channel (131 aa).

2 helical membrane-spanning segments follow: residues 14–34 (VIDLAVGVIIGGAFGKIVTSL) and 67–87 (GSFIQTVIDFLIISFSIFIFI).

It belongs to the MscL family. As to quaternary structure, homopentamer.

Its subcellular location is the cell membrane. Its function is as follows. Channel that opens in response to stretch forces in the membrane lipid bilayer. May participate in the regulation of osmotic pressure changes within the cell. This is Large-conductance mechanosensitive channel from Bacillus pumilus (strain SAFR-032).